The following is a 157-amino-acid chain: 3-hydroxyacyl-[acyl-carrier-protein] dehydratase FabZ (157 aa).

The active site involves His-58.

This sequence belongs to the thioester dehydratase family. FabZ subfamily.

The protein resides in the cytoplasm. It catalyses the reaction a (3R)-hydroxyacyl-[ACP] = a (2E)-enoyl-[ACP] + H2O. In terms of biological role, involved in unsaturated fatty acids biosynthesis. Catalyzes the dehydration of short chain beta-hydroxyacyl-ACPs and long chain saturated and unsaturated beta-hydroxyacyl-ACPs. In Brucella abortus biovar 1 (strain 9-941), this protein is 3-hydroxyacyl-[acyl-carrier-protein] dehydratase FabZ.